Reading from the N-terminus, the 78-residue chain is uncharacterized protein (78 aa).

This is an uncharacterized protein from Enterobacteria phage RB51 (Bacteriophage RB51).